The chain runs to 211 residues: LexA repressor (211 aa).

A DNA-binding region (H-T-H motif) is located at residues 27 to 47 (QTEIARAFGFKGVRAVQHHLD). Catalysis depends on for autocatalytic cleavage activity residues Ser131 and Lys168.

Belongs to the peptidase S24 family. Homodimer.

It carries out the reaction Hydrolysis of Ala-|-Gly bond in repressor LexA.. Functionally, represses a number of genes involved in the response to DNA damage (SOS response), including recA and lexA. In the presence of single-stranded DNA, RecA interacts with LexA causing an autocatalytic cleavage which disrupts the DNA-binding part of LexA, leading to derepression of the SOS regulon and eventually DNA repair. The sequence is that of LexA repressor from Xylella fastidiosa (strain M12).